The sequence spans 209 residues: Ribosomal RNA small subunit methyltransferase G (209 aa).

Residues G71, F76, 122-123 (AE), and R135 contribute to the S-adenosyl-L-methionine site.

This sequence belongs to the methyltransferase superfamily. RNA methyltransferase RsmG family.

Its subcellular location is the cytoplasm. Its function is as follows. Specifically methylates the N7 position of a guanine in 16S rRNA. In Phocaeicola vulgatus (strain ATCC 8482 / DSM 1447 / JCM 5826 / CCUG 4940 / NBRC 14291 / NCTC 11154) (Bacteroides vulgatus), this protein is Ribosomal RNA small subunit methyltransferase G.